Consider the following 469-residue polypeptide: Ribosomal protein uS12 methylthiotransferase RimO (469 aa).

Positions 34–144 (NKIGFVSLGC…VLEHVHQFAP (111 aa)) constitute an MTTase N-terminal domain. Residues Cys43, Cys79, Cys108, Cys176, Cys180, and Cys183 each contribute to the [4Fe-4S] cluster site. In terms of domain architecture, Radical SAM core spans 162–399 (LTPKHYAYLK…MLVQQEISAA (238 aa)). The 67-residue stretch at 402 to 468 (QKRIGSTMKV…EYDLWGSLVR (67 aa)) folds into the TRAM domain.

It belongs to the methylthiotransferase family. RimO subfamily. [4Fe-4S] cluster is required as a cofactor.

It is found in the cytoplasm. It catalyses the reaction L-aspartate(89)-[ribosomal protein uS12]-hydrogen + (sulfur carrier)-SH + AH2 + 2 S-adenosyl-L-methionine = 3-methylsulfanyl-L-aspartate(89)-[ribosomal protein uS12]-hydrogen + (sulfur carrier)-H + 5'-deoxyadenosine + L-methionine + A + S-adenosyl-L-homocysteine + 2 H(+). In terms of biological role, catalyzes the methylthiolation of an aspartic acid residue of ribosomal protein uS12. The sequence is that of Ribosomal protein uS12 methylthiotransferase RimO from Vibrio vulnificus (strain YJ016).